The chain runs to 145 residues: MTVHNLYLFDRNGVCLHYSEWHRKKQAGIPKEEEYKLMYGMLFSIRSFVSKMSPLDMKDGFLAFQTSRYKLHYYETPTGIKVVMNTDLGVGPIRDVLHHIYSALYVELVVKNPLCPLGQTVQSELFRSRLDSYVRSLPFFSARAG.

The protein belongs to the TRAPP small subunits family. BET5 subfamily. Part of the multisubunit transport protein particle (TRAPP) complex. The heterodimer TRAPPC6B-TRAPPC3 interacts with TRAPPC1 likely providing a core for TRAPP complex formation.

It localises to the golgi apparatus. The protein resides in the cis-Golgi network. The protein localises to the endoplasmic reticulum. In terms of biological role, may play a role in vesicular transport from endoplasmic reticulum to Golgi. The sequence is that of Trafficking protein particle complex subunit 1 (TRAPPC1) from Bos taurus (Bovine).